The primary structure comprises 377 residues: Trichodiene synthase (377 aa).

It belongs to the trichodiene synthase family.

It catalyses the reaction (2E,6E)-farnesyl diphosphate = trichodiene + diphosphate. It participates in sesquiterpene biosynthesis; trichothecene biosynthesis. TS is a member of the terpene cyclase group of enzymes. It catalyzes the isomerization and cyclization of farnesyl pyro-phosphate to form trichodiene, the first cyclic intermediate in the biosynthetic pathway for trichothecenes. It serves to branch trichothecene biosynthesis from the isoprenoid pathway. This chain is Trichodiene synthase (TRI5), found in Fusarium poae.